A 295-amino-acid polypeptide reads, in one-letter code: Ectoine dioxygenase (295 aa).

Q129 contributes to the L-ectoine binding site. K135 provides a ligand contact to 2-oxoglutarate. 3 residues coordinate Fe cation: H146, D148, and H247.

The protein belongs to the PhyH family. EctD subfamily. In terms of assembly, homodimer. Fe(2+) is required as a cofactor.

It catalyses the reaction L-ectoine + 2-oxoglutarate + O2 = 5-hydroxyectoine + succinate + CO2. Involved in the biosynthesis of 5-hydroxyectoine, called compatible solute, which helps organisms to survive extreme osmotic stress by acting as a highly soluble organic osmolyte. Catalyzes the 2-oxoglutarate-dependent selective hydroxylation of L-ectoine to yield (4S,5S)-5-hydroxyectoine. This chain is Ectoine dioxygenase, found in Streptomyces avermitilis (strain ATCC 31267 / DSM 46492 / JCM 5070 / NBRC 14893 / NCIMB 12804 / NRRL 8165 / MA-4680).